The sequence spans 751 residues: Valine--tRNA ligase (751 aa).

Lys-520 lines the ATP pocket.

It belongs to the class-I aminoacyl-tRNA synthetase family. ValS type 2 subfamily.

Its subcellular location is the cytoplasm. It carries out the reaction tRNA(Val) + L-valine + ATP = L-valyl-tRNA(Val) + AMP + diphosphate. Its function is as follows. Catalyzes the attachment of valine to tRNA(Val). As ValRS can inadvertently accommodate and process structurally similar amino acids such as threonine, to avoid such errors, it has a 'posttransfer' editing activity that hydrolyzes mischarged Thr-tRNA(Val) in a tRNA-dependent manner. The chain is Valine--tRNA ligase (valS) from Nanoarchaeum equitans (strain Kin4-M).